The sequence spans 518 residues: MALAEEQHQNYHVAEAIPGTPGIHDVRIQPGSENSGFCVDPVGVSNVPGIRRVGLRAEIDTSPPFGSVQEAVTRFGGRGYWVPFKLDDTFNGEFDIKRMEEHAAELEKDLIVKELETLDVLEALGSTKRIVEDLKRQLQQEALRCSDQLSSDIKEMNDEHCHHNPMSSPDLILMELKQAKMNLGKTMDNLVVIQSSVESLNKKMKEEKDFLEKTRAKLTYGFGGPVSLAEELSRIKVKPQVQDEPLREQVKMVAEADETGLNLQNKNSLRTAEMRLVAARKMEEAAKAAEALAIAEITMLSSNGESQDDDSEFCFPEPPRSPVTPRGLRIDNDFSTDKSSRRGILKKLEEATEGVKQSKQALEAALNRVEIANVKQLAAENAFRGWTKDSLKGDNFTPLNHTRRSFFSHLNKHHEPLDILPKPVLKSNISMRDVLRRKQVPKEDVVAPQRQSLEGQIPRRNVNLSQMLKELKQDVKFSARGEKEEVHEEKQYVTQRRKFGFIHITLPLQKQSKKKSSL.

Coiled coils occupy residues 95–141 (DIKR…LQQE) and 188–219 (DNLV…AKLT). Residues 303 to 337 (NGESQDDDSEFCFPEPPRSPVTPRGLRIDNDFSTD) form a disordered region. Basic and acidic residues predominate over residues 328–337 (LRIDNDFSTD). The stretch at 344–375 (ILKKLEEATEGVKQSKQALEAALNRVEIANVK) forms a coiled coil.

It belongs to the WEB family.

This Arabidopsis thaliana (Mouse-ear cress) protein is WEB family protein At2g40480.